The sequence spans 425 residues: MKNFTVITLGCPKNTVDSRHLIDALTKEGFYYVEEFKKADFVFINTCCFINDAKEESIDEILTAAKFKIDRKLIVFGCLSKRYGKELEKEIPEIDAVFGVDEKDKIIDYIKQFSKNSNFISQNFQYTVEPPSYRYIKIAEGCSRRCSFCIIPDVRGPFRSLNPEEILKEVENFVHSGIKEFILVAQDITQYGKDLKGYTLKRLLKDLCSIKGDFWIRLLYLYPSDIDENLIETIADEEKIVKYLDIPMQHSEERILRLMGRRGTKKEYLKKIKQIRQAIPEVTLRSTFIVGFPTETEEEFQRLVDFIEEVQFDRLGVFKYSKEEGTKAYSLKGQIPENVKNRRYNEIMARQAVISLEKNRALIGKKYEALIDYIDADIAIARLYCHAPEIDGVVILENTADLKAGEKVTILITEGYEYDVKGVIV.

Positions 2 to 115 (KNFTVITLGC…IIDYIKQFSK (114 aa)) constitute an MTTase N-terminal domain. Residues Cys-11, Cys-47, Cys-78, Cys-142, Cys-146, and Cys-149 each contribute to the [4Fe-4S] cluster site. In terms of domain architecture, Radical SAM core spans 128-357 (VEPPSYRYIK…MARQAVISLE (230 aa)). A TRAM domain is found at 360 to 425 (RALIGKKYEA…YEYDVKGVIV (66 aa)).

The protein belongs to the methylthiotransferase family. RimO subfamily. The cofactor is [4Fe-4S] cluster.

The protein localises to the cytoplasm. The enzyme catalyses L-aspartate(89)-[ribosomal protein uS12]-hydrogen + (sulfur carrier)-SH + AH2 + 2 S-adenosyl-L-methionine = 3-methylsulfanyl-L-aspartate(89)-[ribosomal protein uS12]-hydrogen + (sulfur carrier)-H + 5'-deoxyadenosine + L-methionine + A + S-adenosyl-L-homocysteine + 2 H(+). In terms of biological role, catalyzes the methylthiolation of an aspartic acid residue of ribosomal protein uS12. This is Ribosomal protein uS12 methylthiotransferase RimO from Thermodesulfovibrio yellowstonii (strain ATCC 51303 / DSM 11347 / YP87).